We begin with the raw amino-acid sequence, 188 residues long: Transcription factor FapR (188 aa).

It belongs to the FapR family.

Transcriptional factor involved in regulation of membrane lipid biosynthesis by repressing genes involved in fatty acid and phospholipid metabolism. This is Transcription factor FapR from Bacillus velezensis (strain DSM 23117 / BGSC 10A6 / LMG 26770 / FZB42) (Bacillus amyloliquefaciens subsp. plantarum).